The chain runs to 218 residues: MARKKVRPRLIAELARRVRALREQRNQPRDSQLYALDYETLTRPHSGRRLPVRAWADVRRESRLLQLLARLPLFGLGRLVTRKSWLWQHDEPCYWRLTRVRPDYTAQNLDHGRAWGILTFKGKSEDTAREIEQVMYHDWRLVPKHEEEAFTAFTAKPEDRLNSVPYPPLLRAMILAERQKNGDTSVQEPLLNLERTRMRPWDYPAKQETKGRAKGTPV.

The protein belongs to the mitochondrion-specific ribosomal protein mS34 family. As to quaternary structure, component of the mitochondrial ribosome small subunit (28S) which comprises a 12S rRNA and about 30 distinct proteins. In terms of tissue distribution, widely expressed (at protein liver).

The protein localises to the mitochondrion. Its function is as follows. Required for mitochondrial translation, plays a role in maintaining the stability of the small ribosomal subunit and the 12S rRNA that are required for mitoribosome formation. This Mus musculus (Mouse) protein is Small ribosomal subunit protein mS34 (Mrps34).